A 54-amino-acid polypeptide reads, in one-letter code: Large ribosomal subunit protein uL15 (54 aa).

The segment covering 1–30 has biased composition (basic residues); the sequence is MPSRLRXTRKLRGHVSHGHGRIGKHRKHPG. A disordered region spans residues 1–42; sequence MPSRLRXTRKLRGHVSHGHGRIGKHRKHPGGRGNAGGMHHHR. Position 39 is a (3S)-3-hydroxyhistidine (histidine 39). Position 47 is an N6-acetyllysine (lysine 47).

Belongs to the universal ribosomal protein uL15 family. Component of the large ribosomal subunit. In terms of processing, hydroxylated on His-39 by MINA.

Its subcellular location is the cytoplasm. Its function is as follows. Component of the large ribosomal subunit. The ribosome is a large ribonucleoprotein complex responsible for the synthesis of proteins in the cell. The protein is Large ribosomal subunit protein uL15 (RPL27A) of Sus scrofa (Pig).